Consider the following 82-residue polypeptide: MDKKILSLRIVMDDEMETKFYEIKKELGLSSNAEVVRFLVNRFYKELVKKGGLAAVLLSNFANLVSTDWNIVESLGVFPIFG.

This is an uncharacterized protein from Archaeoglobus fulgidus (strain ATCC 49558 / DSM 4304 / JCM 9628 / NBRC 100126 / VC-16).